The chain runs to 429 residues: Glutamyl-tRNA reductase (429 aa).

Substrate-binding positions include 50–53 (TCNR), Ser110, 115–117 (ETQ), and Gln121. Cys51 functions as the Nucleophile in the catalytic mechanism. 190–195 (GAGEMA) lines the NADP(+) pocket.

This sequence belongs to the glutamyl-tRNA reductase family. Homodimer.

It catalyses the reaction (S)-4-amino-5-oxopentanoate + tRNA(Glu) + NADP(+) = L-glutamyl-tRNA(Glu) + NADPH + H(+). It participates in porphyrin-containing compound metabolism; protoporphyrin-IX biosynthesis; 5-aminolevulinate from L-glutamyl-tRNA(Glu): step 1/2. Functionally, catalyzes the NADPH-dependent reduction of glutamyl-tRNA(Glu) to glutamate 1-semialdehyde (GSA). The chain is Glutamyl-tRNA reductase from Campylobacter hominis (strain ATCC BAA-381 / DSM 21671 / CCUG 45161 / LMG 19568 / NCTC 13146 / CH001A).